Consider the following 100-residue polypeptide: Urease subunit gamma (100 aa).

It belongs to the urease gamma subunit family. As to quaternary structure, heterotrimer of UreA (gamma), UreB (beta) and UreC (alpha) subunits. Three heterotrimers associate to form the active enzyme.

The protein resides in the cytoplasm. The catalysed reaction is urea + 2 H2O + H(+) = hydrogencarbonate + 2 NH4(+). Its pathway is nitrogen metabolism; urea degradation; CO(2) and NH(3) from urea (urease route): step 1/1. This Polaromonas naphthalenivorans (strain CJ2) protein is Urease subunit gamma.